The following is a 180-amino-acid chain: Large ribosomal subunit protein uL18m (180 aa).

Belongs to the universal ribosomal protein uL18 family. As to quaternary structure, component of the mitochondrial ribosome large subunit (39S) which comprises a 16S rRNA and about 50 distinct proteins.

The protein localises to the mitochondrion. In terms of biological role, together with thiosulfate sulfurtransferase (TST), acts as a mitochondrial import factor for the cytosolic 5S rRNA. The precursor form shows RNA chaperone activity; is able to fold the 5S rRNA into an import-competent conformation that is recognized by rhodanese (TST). Both the cytoplasmic and mitochondrial forms are able to bind to the helix IV-loop D in the gamma domain of the 5S rRNA. This chain is Large ribosomal subunit protein uL18m (MRPL18), found in Bos taurus (Bovine).